The following is a 382-amino-acid chain: DnaJ homolog dnj-20 (382 aa).

A signal peptide spans 1-21; the sequence is MRILNVSLLVLTAFLVDFVEC. In terms of domain architecture, J spans 24–89; sequence DFYKILGVSK…EKRAMYDRHG (66 aa).

This Caenorhabditis briggsae protein is DnaJ homolog dnj-20.